We begin with the raw amino-acid sequence, 693 residues long: Translation initiation factor IF-2 (693 aa).

Positions Pro181–Glu349 constitute a tr-type G domain. The G1 stretch occupies residues Gly190–Thr197. Gly190–Thr197 is a binding site for GTP. The tract at residues Gly215–Ser219 is G2. The G3 stretch occupies residues Asp236–Gly239. GTP contacts are provided by residues Asp236 to His240 and Asn290 to Asp293. A G4 region spans residues Asn290–Asp293. The G5 stretch occupies residues Ser327 to Arg329.

This sequence belongs to the TRAFAC class translation factor GTPase superfamily. Classic translation factor GTPase family. IF-2 subfamily.

The protein localises to the cytoplasm. Its function is as follows. One of the essential components for the initiation of protein synthesis. Protects formylmethionyl-tRNA from spontaneous hydrolysis and promotes its binding to the 30S ribosomal subunits. Also involved in the hydrolysis of GTP during the formation of the 70S ribosomal complex. The polypeptide is Translation initiation factor IF-2 (Thermotoga petrophila (strain ATCC BAA-488 / DSM 13995 / JCM 10881 / RKU-1)).